A 1458-amino-acid polypeptide reads, in one-letter code: RNA-directed RNA polymerase P1 (1458 aa).

The tract at residues 148-168 (LSQDDRDEKGNDNREEEDVKN) is disordered. In terms of domain architecture, RdRp catalytic spans 686-894 (VGIGFATIYQ…KTVISHISGE (209 aa)). The segment at 971–993 (DESIENKPNRRGSKAKARSTKTN) is disordered. The span at 979 to 989 (NRRGSKAKARS) shows a compositional bias: basic residues.

Belongs to the reoviridae RNA-directed RNA polymerase family.

It is found in the virion. It localises to the host cytoplasm. It catalyses the reaction RNA(n) + a ribonucleoside 5'-triphosphate = RNA(n+1) + diphosphate. In terms of biological role, RNA-directed RNA polymerase that is involved in both transcription and genome replication. Together with the capping enzyme P5 and protein P7, forms an enzyme complex positioned near the channels situated at each of the five-fold vertices of the core. This chain is RNA-directed RNA polymerase P1, found in Nephotettix cincticeps (Green rice leafhopper).